A 127-amino-acid chain; its full sequence is Insulin-like growth factor 3.L (127 aa).

The first 49 residues, 1-49, serve as a signal peptide directing secretion; sequence MPVTAMCLQDSKKLKKAKLTRKKVTPFPFSRMVLCLSLVFTLYVEATNA. A b region spans residues 49–80; the sequence is ARCLRPRSKELLCGSELVDILQFICGPTGFYV. Intrachain disulfides connect cysteine 61/cysteine 99, cysteine 73/cysteine 112, and cysteine 98/cysteine 103. The interval 81–92 is c; sequence SKGASFRNRNRP. An a region spans residues 93 to 113; that stretch reads GIVEECCFCGCSVAILESYCA. The interval 114-121 is d; it reads APVTNFTG. A propeptide spans 122 to 127 (e peptide); that stretch reads REEQKS.

This sequence belongs to the insulin family.

It localises to the secreted. Functionally, the insulin-like growth factors, isolated from plasma, are structurally and functionally related to insulin but have a much higher growth-promoting activity. Promotes anterior neural development. The protein is Insulin-like growth factor 3.L of Xenopus laevis (African clawed frog).